A 644-amino-acid polypeptide reads, in one-letter code: Exoribonuclease 2 (644 aa).

The 328-residue stretch at 189 to 516 folds into the RNB domain; the sequence is RQDLTALNFV…NHRLLKAVIK (328 aa). The S1 motif domain maps to 561-643; the sequence is NTRFAAEIID…ETRSIIARPA (83 aa).

The protein belongs to the RNR ribonuclease family. RNase II subfamily.

The protein localises to the cytoplasm. It catalyses the reaction Exonucleolytic cleavage in the 3'- to 5'-direction to yield nucleoside 5'-phosphates.. In terms of biological role, involved in mRNA degradation. Hydrolyzes single-stranded polyribonucleotides processively in the 3' to 5' direction. This is Exoribonuclease 2 from Salmonella paratyphi A (strain ATCC 9150 / SARB42).